Reading from the N-terminus, the 483-residue chain is Glycogen synthase (483 aa).

K15 contributes to the ADP-alpha-D-glucose binding site.

Belongs to the glycosyltransferase 1 family. Bacterial/plant glycogen synthase subfamily.

It catalyses the reaction [(1-&gt;4)-alpha-D-glucosyl](n) + ADP-alpha-D-glucose = [(1-&gt;4)-alpha-D-glucosyl](n+1) + ADP + H(+). Its pathway is glycan biosynthesis; glycogen biosynthesis. In terms of biological role, synthesizes alpha-1,4-glucan chains using ADP-glucose. In Exiguobacterium sibiricum (strain DSM 17290 / CCUG 55495 / CIP 109462 / JCM 13490 / 255-15), this protein is Glycogen synthase.